Reading from the N-terminus, the 309-residue chain is Porphobilinogen deaminase (309 aa).

Cysteine 241 is modified (S-(dipyrrolylmethanemethyl)cysteine).

It belongs to the HMBS family. In terms of assembly, monomer. Requires dipyrromethane as cofactor.

It catalyses the reaction 4 porphobilinogen + H2O = hydroxymethylbilane + 4 NH4(+). Its pathway is porphyrin-containing compound metabolism; protoporphyrin-IX biosynthesis; coproporphyrinogen-III from 5-aminolevulinate: step 2/4. In terms of biological role, tetrapolymerization of the monopyrrole PBG into the hydroxymethylbilane pre-uroporphyrinogen in several discrete steps. In Bacillus anthracis (strain A0248), this protein is Porphobilinogen deaminase.